Consider the following 171-residue polypeptide: ATP synthase subunit b (171 aa).

The chain crosses the membrane as a helical span at residues 2 to 22; it reads FLVKMVLGFLIFLSPLCATGL.

The protein belongs to the ATPase B chain family. F-type ATPases have 2 components, F(1) - the catalytic core - and F(0) - the membrane proton channel. F(1) has five subunits: alpha(3), beta(3), gamma(1), delta(1), epsilon(1). F(0) has three main subunits: a(1), b(2) and c(10-14). The alpha and beta chains form an alternating ring which encloses part of the gamma chain. F(1) is attached to F(0) by a central stalk formed by the gamma and epsilon chains, while a peripheral stalk is formed by the delta and b chains.

The protein localises to the cell inner membrane. F(1)F(0) ATP synthase produces ATP from ADP in the presence of a proton or sodium gradient. F-type ATPases consist of two structural domains, F(1) containing the extramembraneous catalytic core and F(0) containing the membrane proton channel, linked together by a central stalk and a peripheral stalk. During catalysis, ATP synthesis in the catalytic domain of F(1) is coupled via a rotary mechanism of the central stalk subunits to proton translocation. In terms of biological role, component of the F(0) channel, it forms part of the peripheral stalk, linking F(1) to F(0). This is ATP synthase subunit b from Helicobacter pylori (strain Shi470).